Consider the following 398-residue polypeptide: S-adenosylmethionine synthase (398 aa).

His26 is a binding site for ATP. Asp28 provides a ligand contact to Mg(2+). K(+) is bound at residue Glu54. L-methionine contacts are provided by Glu67 and Gln110. A flexible loop region spans residues 110 to 120; that stretch reads QSPDIAQGVNE. Residues 177–179, 243–244, Asp252, 258–259, Ala275, and Lys279 each bind ATP; these read DAK, RF, and RK. Asp252 is a binding site for L-methionine. Lys283 provides a ligand contact to L-methionine.

The protein belongs to the AdoMet synthase family. Homotetramer; dimer of dimers. Mg(2+) is required as a cofactor. Requires K(+) as cofactor.

It is found in the cytoplasm. The enzyme catalyses L-methionine + ATP + H2O = S-adenosyl-L-methionine + phosphate + diphosphate. The protein operates within amino-acid biosynthesis; S-adenosyl-L-methionine biosynthesis; S-adenosyl-L-methionine from L-methionine: step 1/1. Its function is as follows. Catalyzes the formation of S-adenosylmethionine (AdoMet) from methionine and ATP. The overall synthetic reaction is composed of two sequential steps, AdoMet formation and the subsequent tripolyphosphate hydrolysis which occurs prior to release of AdoMet from the enzyme. In Desulfotalea psychrophila (strain LSv54 / DSM 12343), this protein is S-adenosylmethionine synthase.